The sequence spans 48 residues: M-oxotoxin-Ot1c (48 aa).

It localises to the secreted. It is found in the target cell membrane. Its function is as follows. Disrupts cell membranes, particularly those rich in phosphocholine, through formation of pores. Has antimicrobial activity, hemolytic activity and insecticidal activity. The polypeptide is M-oxotoxin-Ot1c (Oxyopes takobius (Lynx spider)).